The sequence spans 113 residues: Death-associated protein-like 1.L (113 aa).

Residues 1 to 57 (MAKEQKMQSSPQALKAGHLPAVKAGGMRVSKKQGNEENSAPEKNAKKTLQEKPSSVL) are disordered.

It belongs to the DAP-DAPL1 family. Associates with ribosomes; preventing translation. Interacts with eiF5a (eif5a and eif5a2); preventing translation.

Its function is as follows. Ribosome-binding protein that promotes ribosome hibernation, a process during which ribosomes are stabilized in an inactive state and preserved from proteasomal degradation. Acts via its association with eiF5a (eif5a and eif5a2) at the polypeptide exit tunnel of the ribosome, preventing mRNA translation. Plays a key role in ribosome hibernation in the mature egg by preventing mRNA translation, leading to ribosome inactivation. Ribosomes, which are produced in large quantities during oogenesis, are stored and translationally repressed in the egg and early embryo. This is Death-associated protein-like 1.L (dapl1.L) from Xenopus laevis (African clawed frog).